The chain runs to 89 residues: Acylphosphatase (89 aa).

The 86-residue stretch at 3–88 folds into the Acylphosphatase-like domain; that stretch reads TLHLQIEGRV…GEYSGFEKRS (86 aa). Catalysis depends on residues R18 and N36.

This sequence belongs to the acylphosphatase family.

It carries out the reaction an acyl phosphate + H2O = a carboxylate + phosphate + H(+). In Thiobacillus denitrificans (strain ATCC 25259 / T1), this protein is Acylphosphatase (acyP).